Here is a 677-residue protein sequence, read N- to C-terminus: Methionine--tRNA ligase (677 aa).

The 'HIGH' region motif lies at proline 15–histidine 25. Zn(2+) contacts are provided by cysteine 146, cysteine 149, cysteine 159, and cysteine 162. A 'KMSKS' region motif is present at residues lysine 333–serine 337. ATP is bound at residue lysine 336. The 103-residue stretch at aspartate 575–lysine 677 folds into the tRNA-binding domain.

It belongs to the class-I aminoacyl-tRNA synthetase family. MetG type 1 subfamily. As to quaternary structure, homodimer. The cofactor is Zn(2+).

It localises to the cytoplasm. It catalyses the reaction tRNA(Met) + L-methionine + ATP = L-methionyl-tRNA(Met) + AMP + diphosphate. In terms of biological role, is required not only for elongation of protein synthesis but also for the initiation of all mRNA translation through initiator tRNA(fMet) aminoacylation. This chain is Methionine--tRNA ligase, found in Escherichia coli O81 (strain ED1a).